Reading from the N-terminus, the 1024-residue chain is Error-prone DNA polymerase (1024 aa).

It belongs to the DNA polymerase type-C family. DnaE2 subfamily.

The protein resides in the cytoplasm. It carries out the reaction DNA(n) + a 2'-deoxyribonucleoside 5'-triphosphate = DNA(n+1) + diphosphate. DNA polymerase involved in damage-induced mutagenesis and translesion synthesis (TLS). It is not the major replicative DNA polymerase. The chain is Error-prone DNA polymerase from Vibrio vulnificus (strain YJ016).